Reading from the N-terminus, the 1326-residue chain is Probable serine/threonine-protein kinase gdt8 (1326 aa).

The signal sequence occupies residues 1–22 (MINKILIKLITIIIFCFSFLFA). Residues 23–782 (EEDLIRTPPG…VDRNENLELK (760 aa)) lie on the Extracellular side of the membrane. Disordered stretches follow at residues 419–467 (VDQN…GNQG) and 731–762 (EPPT…QTPI). 2 stretches are compositionally biased toward low complexity: residues 422-460 (NNNN…NNNN) and 731-761 (EPPT…TQTP). The helical transmembrane segment at 783–803 (IALPICLSLALLIGIIIMICI) threads the bilayer. Over 804–1326 (FKKVQSNSKL…TKEDKDLDEN (523 aa)) the chain is Cytoplasmic. The segment at 833 to 858 (IVSQPPTVIEEKPQDNSKPDDQKLIE) is disordered. A compositionally biased stretch (basic and acidic residues) spans 841–858 (IEEKPQDNSKPDDQKLIE). Positions 1036 to 1292 (IKTEQLIASY…FSEISLHLEI (257 aa)) constitute a Protein kinase domain. ATP-binding positions include 1042–1050 (IASYLPSKV) and Lys1065. Catalysis depends on Asp1158, which acts as the Proton acceptor. A disordered region spans residues 1301–1326 (MNESEESTSNHNTNSKTKEDKDLDEN). Residues 1316–1326 (KTKEDKDLDEN) show a composition bias toward basic and acidic residues.

This sequence in the N-terminal section; belongs to the GDT family. It in the C-terminal section; belongs to the protein kinase superfamily. TKL Ser/Thr protein kinase family.

It localises to the membrane. It catalyses the reaction L-seryl-[protein] + ATP = O-phospho-L-seryl-[protein] + ADP + H(+). It carries out the reaction L-threonyl-[protein] + ATP = O-phospho-L-threonyl-[protein] + ADP + H(+). The polypeptide is Probable serine/threonine-protein kinase gdt8 (gdt8) (Dictyostelium discoideum (Social amoeba)).